A 268-amino-acid polypeptide reads, in one-letter code: MTLLNVSDLSHHYAHGGFSGKHQHQAVLNNVSLALKSGETVALLGRSGCGKSTLARLLVGLESPSQGNISWRGEPLAKLNRAQRKAFRRDIQMVFQDSISAVNPRKTVREILREPMRHLLSLKKAEQLARASEMLKAVDLDDSVLDKRPPQLSGGQLQRVCLARALAVEPKLLILDEAVSNLDLVLQAGVIRLLKKLQQQFGTACLFITHDLRLVERFCQRVMVMDNGQIVETQVVGDKLTFSSDAGRVLQNAVLPAFPVRRRTTEKV.

Residues 4-252 (LNVSDLSHHY…SSDAGRVLQN (249 aa)) form the ABC transporter domain. Position 45–52 (45–52 (GRSGCGKS)) interacts with ATP.

It belongs to the ABC transporter superfamily. Nickel importer (TC 3.A.1.5.3) family. In terms of assembly, the complex is composed of two ATP-binding proteins (NikD and NikE), two transmembrane proteins (NikB and NikC) and a solute-binding protein (NikA).

Its subcellular location is the cell inner membrane. It carries out the reaction Ni(2+)(out) + ATP + H2O = Ni(2+)(in) + ADP + phosphate + H(+). Functionally, part of the ABC transporter complex NikABCDE involved in nickel import. Responsible for energy coupling to the transport system. This is Nickel import ATP-binding protein NikE from Escherichia coli O6:K15:H31 (strain 536 / UPEC).